Reading from the N-terminus, the 714-residue chain is Methylmalonyl-CoA mutase (714 aa).

Residues 584–714 (RPRILIAKMG…VLNLISQHHD (131 aa)) form the B12-binding domain. H597 serves as a coordination point for adenosylcob(III)alamin.

It belongs to the methylmalonyl-CoA mutase family. Homodimer. Interacts with ArgK. Adenosylcob(III)alamin is required as a cofactor.

It catalyses the reaction (R)-methylmalonyl-CoA = succinyl-CoA. Functionally, catalyzes the interconversion of succinyl-CoA and methylmalonyl-CoA. Could be part of a pathway that converts succinate to propionate. The sequence is that of Methylmalonyl-CoA mutase (scpA) from Escherichia coli (strain K12).